Here is a 977-residue protein sequence, read N- to C-terminus: Myb-like protein I (977 aa).

Residues 1–122 (MMNNQSMVRY…QQQQQQLDKS (122 aa)) form a disordered region. The span at 21-39 (PSPPVYSPIYRSPPPPPQP) shows a compositional bias: pro residues. Basic and acidic residues predominate over residues 52 to 68 (DNSHHQVMDNSDHEQQQ). The segment covering 75 to 118 (QQQQQQQHHHQQQQQQQHHQQQQQQHHQQQQQHHHQQQQQQQQQ) has biased composition (low complexity). Residues 167-222 (EKKKQSRYWTPEEHSRFIEALSKYGHKDVKSISQYVSTRNPTQVRTHAQKYFLRID) form the HTH myb-type domain. A DNA-binding region (H-T-H motif) is located at residues 195–218 (VKSISQYVSTRNPTQVRTHAQKYF). Disordered stretches follow at residues 229–331 (LESK…SSPL), 422–516 (INNN…SSQP), 531–650 (NNNN…QQQM), 738–853 (LNSN…WPGP), and 872–960 (NYVP…GMNQ). A compositionally biased stretch (acidic residues) spans 241-252 (KDDDWLREEYND). Residues 254 to 275 (GSPTQYSSCSNSPTTNSVANPF) show a composition bias toward polar residues. 2 stretches are compositionally biased toward low complexity: residues 276-329 (SNSL…GNSS) and 422-504 (INNN…INNN). Polar residues predominate over residues 505 to 516 (GPNSPNLLSSQP). Low complexity predominate over residues 738–754 (LNSNSGNSSPNISSING). A compositionally biased stretch (polar residues) spans 783-797 (LSGSPSHSPAQSPHY). Low complexity-rich tracts occupy residues 798 to 848 (NLNN…SHSI) and 887 to 943 (SPHF…GSGS). Residues 944–960 (WHQYQATDSPTGWGMNQ) show a composition bias toward polar residues.

The protein localises to the nucleus. The sequence is that of Myb-like protein I (mybI) from Dictyostelium discoideum (Social amoeba).